Reading from the N-terminus, the 329-residue chain is BRISC and BRCA1-A complex member 1 (329 aa).

An N-acetylmethionine modification is found at Met1. The tract at residues 1 to 84 is disordered; sequence MEVAEPSSPT…VPPPAPEVQI (84 aa). Phosphoserine is present on Ser8. A compositionally biased stretch (acidic residues) spans 10-19; that stretch reads TEEEEEEEEH. 4 positions are modified to phosphoserine: Ser29, Ser49, Ser57, and Ser62. Thr65 carries the phosphothreonine modification. Position 66 is a phosphoserine (Ser66). Residues 95-298 are VWFA-like; that stretch reads VIICLDLSEE…LELHNCMAKL (204 aa).

The protein belongs to the BABAM1 family. Component of the ARISC complex, at least composed of UIMC1/RAP80, ABRAXAS1, BRCC3/BRCC36, BABAM2 and BABAM1/NBA1. Component of the BRCA1-A complex, at least composed of BRCA1, BARD1, UIMC1/RAP80, ABRAXAS1, BRCC3/BRCC36, BABAM2 and BABAM1/NBA1. In the BRCA1-A complex, interacts directly with ABRAXAS1 and BABAM2. Component of the BRISC complex, at least composed of ABRAXAS2, BRCC3/BRCC36, BABAM2 and BABAM1/NBA1. Identified in a complex with SHMT2 and the other subunits of the BRISC complex.

The protein resides in the cytoplasm. Its subcellular location is the nucleus. In terms of biological role, component of the BRCA1-A complex, a complex that specifically recognizes 'Lys-63'-linked ubiquitinated histones H2A and H2AX at DNA lesions sites, leading to target the BRCA1-BARD1 heterodimer to sites of DNA damage at double-strand breaks (DSBs). The BRCA1-A complex also possesses deubiquitinase activity that specifically removes 'Lys-63'-linked ubiquitin on histones H2A and H2AX. In the BRCA1-A complex, it is required for the complex integrity and its localization at DSBs. Component of the BRISC complex, a multiprotein complex that specifically cleaves 'Lys-63'-linked ubiquitin in various substrates. In these 2 complexes, it is probably required to maintain the stability of BABAM2 and help the 'Lys-63'-linked deubiquitinase activity mediated by BRCC3/BRCC36 component. The BRISC complex is required for normal mitotic spindle assembly and microtubule attachment to kinetochores via its role in deubiquitinating NUMA1. Plays a role in interferon signaling via its role in the deubiquitination of the interferon receptor IFNAR1; deubiquitination increases IFNAR1 activity by enhancing its stability and cell surface expression. Down-regulates the response to bacterial lipopolysaccharide (LPS) via its role in IFNAR1 deubiquitination. The sequence is that of BRISC and BRCA1-A complex member 1 (BABAM1) from Homo sapiens (Human).